A 266-amino-acid chain; its full sequence is 3-methyl-2-oxobutanoate hydroxymethyltransferase (266 aa).

The Mg(2+) site is built by D46 and D85. 3-methyl-2-oxobutanoate-binding positions include 46 to 47 (DS), D85, and K115. E117 serves as a coordination point for Mg(2+). E183 functions as the Proton acceptor in the catalytic mechanism.

The protein belongs to the PanB family. In terms of assembly, homodecamer; pentamer of dimers. Mg(2+) serves as cofactor.

Its subcellular location is the cytoplasm. It catalyses the reaction 3-methyl-2-oxobutanoate + (6R)-5,10-methylene-5,6,7,8-tetrahydrofolate + H2O = 2-dehydropantoate + (6S)-5,6,7,8-tetrahydrofolate. It participates in cofactor biosynthesis; (R)-pantothenate biosynthesis; (R)-pantoate from 3-methyl-2-oxobutanoate: step 1/2. Its function is as follows. Catalyzes the reversible reaction in which hydroxymethyl group from 5,10-methylenetetrahydrofolate is transferred onto alpha-ketoisovalerate to form ketopantoate. The polypeptide is 3-methyl-2-oxobutanoate hydroxymethyltransferase (Trichlorobacter lovleyi (strain ATCC BAA-1151 / DSM 17278 / SZ) (Geobacter lovleyi)).